The chain runs to 537 residues: Cytochrome P450 monooxygenase alt2 (537 aa).

A helical transmembrane segment spans residues 4 to 24; the sequence is HLLILAAVVLLIIHIVNNFLI. Cys474 is a binding site for heme.

The protein belongs to the cytochrome P450 family. It depends on heme as a cofactor.

The protein resides in the membrane. It functions in the pathway secondary metabolite biosynthesis. Cytochrome P450 monooxygenase; part of the gene cluster that mediates the biosynthesis of alternapyrone derivatives. Alternapyrone is a decaketide with octa-methylation from methionine on every C2 unit except the third unit. All the domains in the polyketide synthase alt5 are apparently involved in alternapyrone synthesis, that is, the 8 CMeT, 7 KR, 7 DH, and 4 ER reactions in the 9 KS-mediated condensation steps required for alternapyrone synthesis. the alternapyrone produced by alt5 might be intensively modified by cytochrome P450 monooxygenases alt1, alt2 and alt3 and FAD-dependent oxidoreductase alt4 present in the alt gene cluster. This chain is Cytochrome P450 monooxygenase alt2, found in Alternaria solani.